A 348-amino-acid chain; its full sequence is D-erythrose-4-phosphate dehydrogenase (348 aa).

NAD(+) contacts are provided by residues Arg-12–Ile-13 and Arg-81. Residues Ser-154–Thr-156, Arg-200, Thr-213–Lys-214, and Arg-236 each bind substrate. The active-site Nucleophile is Cys-155. Asn-318 is an NAD(+) binding site.

This sequence belongs to the glyceraldehyde-3-phosphate dehydrogenase family. Epd subfamily. Homotetramer.

It localises to the cytoplasm. It catalyses the reaction D-erythrose 4-phosphate + NAD(+) + H2O = 4-phospho-D-erythronate + NADH + 2 H(+). The protein operates within cofactor biosynthesis; pyridoxine 5'-phosphate biosynthesis; pyridoxine 5'-phosphate from D-erythrose 4-phosphate: step 1/5. In terms of biological role, catalyzes the NAD-dependent conversion of D-erythrose 4-phosphate to 4-phosphoerythronate. The protein is D-erythrose-4-phosphate dehydrogenase of Salmonella agona (strain SL483).